Here is a 482-residue protein sequence, read N- to C-terminus: Glucose starvation modulator protein 1 (482 aa).

Residues 20-48 constitute a DNA-binding region (zn(2)-C6 fungal-type); sequence CVFCHEKHLQCDVGRPCQNCEKRNIGESC. The region spanning 350 to 422 is the PAS domain; sequence LLEYENMSKM…KLFNEYLAFS (73 aa).

Belongs to the ERT1/acuK family.

It is found in the nucleus. Functionally, transcription factor which regulates nonfermentable carbon utilization. The protein is Glucose starvation modulator protein 1 (GSM1) of Eremothecium gossypii (strain ATCC 10895 / CBS 109.51 / FGSC 9923 / NRRL Y-1056) (Yeast).